The primary structure comprises 31 residues: Cytochrome b6-f complex subunit 6 (31 aa).

A helical transmembrane segment spans residues leucine 4–glycine 24.

This sequence belongs to the PetL family. In terms of assembly, the 4 large subunits of the cytochrome b6-f complex are cytochrome b6, subunit IV (17 kDa polypeptide, PetD), cytochrome f and the Rieske protein, while the 4 small subunits are PetG, PetL, PetM and PetN. The complex functions as a dimer.

Its subcellular location is the plastid. The protein localises to the chloroplast thylakoid membrane. Component of the cytochrome b6-f complex, which mediates electron transfer between photosystem II (PSII) and photosystem I (PSI), cyclic electron flow around PSI, and state transitions. PetL is important for photoautotrophic growth as well as for electron transfer efficiency and stability of the cytochrome b6-f complex. The chain is Cytochrome b6-f complex subunit 6 from Triticum aestivum (Wheat).